We begin with the raw amino-acid sequence, 271 residues long: Oxamate carbamoyltransferase subunit AllH (271 aa).

This sequence belongs to the AllH family. The OXTCase is composed of 3 subunits, AllF, AllG and AllH. Mg(2+) serves as cofactor.

The enzyme catalyses oxamate + carbamoyl phosphate = N-carbamoyl-2-oxoglycine + phosphate. It functions in the pathway nitrogen metabolism; (S)-allantoin degradation. Component of a carbamoyltransferase involved in the anaerobic nitrogen utilization via the assimilation of allantoin. Catalyzes the conversion of oxalurate (N-carbamoyl-2-oxoglycine) to oxamate and carbamoyl phosphate. The chain is Oxamate carbamoyltransferase subunit AllH from Escherichia coli O157:H7.